The chain runs to 317 residues: MNNTTVRIATRKSALALWQAEYVKAQLEHFHDGINVELVPMTTKGDIILDTPLAKVGGKGLFVKELEVAMLEDRADIAVHSMKDVPVDFPEGLGLEVICPREDPRDAFVSNTIKSLSDLPQGSIVGTSSLRRQCQLKASRPDLDIRDLRGNVNTRLRKLDEGQYDAIILAAAGLIRLEMSERIAQFIEPEEMLPANGQGAVGIECRNDDATIKALLAPLECATTRIRVLAERAMNRALQGGCQVPIGSYGVISADGKNIHLRGLVGSVDGSEMIESEITGPVEEGEALGNKLAQELLSRGADKILQQVYSENDIKNS.

Cysteine 242 is modified (S-(dipyrrolylmethanemethyl)cysteine).

The protein belongs to the HMBS family. Monomer. Dipyrromethane is required as a cofactor.

The catalysed reaction is 4 porphobilinogen + H2O = hydroxymethylbilane + 4 NH4(+). It participates in porphyrin-containing compound metabolism; protoporphyrin-IX biosynthesis; coproporphyrinogen-III from 5-aminolevulinate: step 2/4. In terms of biological role, tetrapolymerization of the monopyrrole PBG into the hydroxymethylbilane pre-uroporphyrinogen in several discrete steps. In Colwellia psychrerythraea (strain 34H / ATCC BAA-681) (Vibrio psychroerythus), this protein is Porphobilinogen deaminase.